The chain runs to 137 residues: Small ribosomal subunit protein bS16m (137 aa).

A mitochondrion-targeting transit peptide spans Met1–Ile34. Position 130 is a phosphothreonine (Thr130).

It belongs to the bacterial ribosomal protein bS16 family. In terms of assembly, component of the mitochondrial ribosome small subunit (28S) which comprises a 12S rRNA and about 30 distinct proteins.

The protein resides in the mitochondrion. In Pongo abelii (Sumatran orangutan), this protein is Small ribosomal subunit protein bS16m (MRPS16).